Reading from the N-terminus, the 393-residue chain is Nucleosome assembly protein 1-like 1-B (393 aa).

Basic and acidic residues predominate over residues 1–10 (MANIDNKEQT). The segment at 1–38 (MANIDNKEQTELDQQDMEDVEDVEEEETGEEANSKARQ) is disordered. The span at 11–30 (ELDQQDMEDVEDVEEEETGE) shows a compositional bias: acidic residues. The short motif at 126 to 151 (YEPTEEECEWKVDEEEDIAEDLKEKA) is the NAP1L motif element. The short motif at 274–280 (IKKKQKH) is the Nuclear localization signal element. The segment covering 347–377 (AIEDDDDDYDEEGEEADDEEGEEEADEDHDP) has biased composition (acidic residues). The tract at residues 347 to 393 (AIEDDDDDYDEEGEEADDEEGEEEADEDHDPDFDPKKAQNPAECKQQ) is disordered.

The protein belongs to the nucleosome assembly protein (NAP) family. In terms of assembly, forms homomultimers. Interacts with histone b4. Interacts with the B-type cyclins ccnb1 and ccnb2. In terms of processing, phosphorylated by cyclin B-cdc2 kinase complexes.

The protein localises to the cytoplasm. It is found in the nucleus. In terms of biological role, acts as a chaperone for the linker histone to facilitate deposition of histone B4 onto linker DNA. Required for both remodeling of sperm chromatin into nucleosomes, and linker histone binding to nucleosome core dimers. Plays a role in tissue-specific gene regulation. Required for primitive hemopoiesis, acting upstream of tal1/scl. This chain is Nucleosome assembly protein 1-like 1-B (nap1l1-b), found in Xenopus laevis (African clawed frog).